The sequence spans 582 residues: Semenogelin-2 (582 aa).

The signal sequence occupies residues 1–23 (MKSIILFVLSLLLILEKQAAVMG). 5 disordered regions span residues 25–62 (KGGSKGQLSSGSSRFPHRHRSQHYSGQKDKQHTESKGS), 131–156 (KGGQVHHGTQNPSQDQGNSPSGKGIF), 173–192 (KEQASASGAQKGRTQGGSQS), 272–477 (NLNQ…EQRQ), and 502–554 (VEGK…SGAH). A compositionally biased stretch (basic and acidic residues) spans 50 to 59 (GQKDKQHTES). Composition is skewed to polar residues over residues 137–151 (HGTQNPSQDQGNSPS) and 174–192 (EQASASGAQKGRTQGGSQS). Residues 292–310 (RTEERQLNHGEKSVQKDVS) show a composition bias toward basic and acidic residues. Positions 325-335 (KSQNQVTIPSQ) are enriched in polar residues. The segment covering 336-345 (DQEHGHKENK) has biased composition (basic and acidic residues). Positions 385 to 395 (KSQNQVTIPSQ) are enriched in polar residues. Over residues 396 to 405 (DQEHGHKENK) the composition is skewed to basic and acidic residues. The segment covering 445–455 (KSQNQVTIPSQ) has biased composition (polar residues). Over residues 456-465 (DQEHGHKENK) the composition is skewed to basic and acidic residues. Polar residues-rich tracts occupy residues 466 to 477 (ISYQSSSTEQRQ) and 506 to 529 (SQIQTPNPNQGQWSGQNAKGNSGK). A compositionally biased stretch (basic and acidic residues) spans 537 to 546 (LLSHEQEGRY).

Belongs to the semenogelin family. Interacts with SERPINA5.

It localises to the secreted. Its function is as follows. Participates in the formation of a gel matrix (sperm coagulum) entrapping the accessory gland secretions and ejaculated spermatozoa. This Macaca nemestrina (Pig-tailed macaque) protein is Semenogelin-2 (SEMG2).